The following is a 221-amino-acid chain: UPF0758 protein YicR (221 aa).

The 123-residue stretch at Ala-99–Ile-221 folds into the MPN domain. Residues His-170, His-172, and Asp-183 each contribute to the Zn(2+) site. The short motif at His-170–Asp-183 is the JAMM motif element.

The protein belongs to the UPF0758 family. YicR subfamily.

In Salmonella newport (strain SL254), this protein is UPF0758 protein YicR.